Here is a 333-residue protein sequence, read N- to C-terminus: Foldase protein PrsA (333 aa).

A signal peptide spans 1–22 (MKKSTKLLAGIVTLASAMTLAA). C23 carries N-palmitoyl cysteine lipidation. C23 carries the S-diacylglycerol cysteine lipid modification. Residues 145–240 (TPEMTTQVIT…NKFYIVKVTK (96 aa)) enclose the PpiC domain. A disordered region spans residues 301–333 (DKKASKANTSKSDQKTSSDSSKDSQSSKSKSEK). Positions 312–322 (SDQKTSSDSSK) are enriched in basic and acidic residues. The segment covering 323-333 (DSQSSKSKSEK) has biased composition (low complexity).

Belongs to the PrsA family.

It is found in the cell membrane. It carries out the reaction [protein]-peptidylproline (omega=180) = [protein]-peptidylproline (omega=0). Plays a major role in protein secretion by helping the post-translocational extracellular folding of several secreted proteins. The sequence is that of Foldase protein PrsA from Streptococcus equi subsp. zooepidemicus (strain H70).